Here is a 142-residue protein sequence, read N- to C-terminus: Putative regulator of rDNA transcription protein 16 (142 aa).

Transmembrane regions (helical) follow at residues 19–39 (ILLT…VMVA), 84–104 (FLLF…AIFL), and 111–131 (SIFI…GLCH).

It localises to the membrane. Functionally, identified in a screen for mutants with decreased levels of rDNA transcription. In Saccharomyces cerevisiae (strain ATCC 204508 / S288c) (Baker's yeast), this protein is Putative regulator of rDNA transcription protein 16 (RRT16).